Reading from the N-terminus, the 337-residue chain is Glyceraldehyde-3-phosphate dehydrogenase (337 aa).

NAD(+) contacts are provided by residues 11–12 (RI), Asp33, and Lys78. Residues 149–151 (SCT), Thr180, 209–210 (TG), and Arg232 contribute to the D-glyceraldehyde 3-phosphate site. Cys150 serves as the catalytic Nucleophile. Asn314 contributes to the NAD(+) binding site.

Belongs to the glyceraldehyde-3-phosphate dehydrogenase family. Homotetramer.

The protein resides in the cytoplasm. It carries out the reaction D-glyceraldehyde 3-phosphate + phosphate + NAD(+) = (2R)-3-phospho-glyceroyl phosphate + NADH + H(+). It functions in the pathway carbohydrate degradation; glycolysis; pyruvate from D-glyceraldehyde 3-phosphate: step 1/5. This Lyophyllum shimeji (Hon-shimeji) protein is Glyceraldehyde-3-phosphate dehydrogenase (GPD).